A 407-amino-acid polypeptide reads, in one-letter code: Imidazolonepropionase (407 aa).

The Fe(3+) site is built by His-74 and His-76. Zn(2+)-binding residues include His-74 and His-76. 4-imidazolone-5-propanoate is bound by residues Arg-83, Tyr-146, and His-179. Tyr-146 serves as a coordination point for N-formimidoyl-L-glutamate. Residue His-244 participates in Fe(3+) binding. Position 244 (His-244) interacts with Zn(2+). Gln-247 is a 4-imidazolone-5-propanoate binding site. Fe(3+) is bound at residue Asp-319. Residue Asp-319 coordinates Zn(2+). Positions 321 and 323 each coordinate N-formimidoyl-L-glutamate. 4-imidazolone-5-propanoate is bound at residue Thr-324.

It belongs to the metallo-dependent hydrolases superfamily. HutI family. Requires Zn(2+) as cofactor. Fe(3+) serves as cofactor.

The protein localises to the cytoplasm. It catalyses the reaction 4-imidazolone-5-propanoate + H2O = N-formimidoyl-L-glutamate. It participates in amino-acid degradation; L-histidine degradation into L-glutamate; N-formimidoyl-L-glutamate from L-histidine: step 3/3. Its function is as follows. Catalyzes the hydrolytic cleavage of the carbon-nitrogen bond in imidazolone-5-propanoate to yield N-formimidoyl-L-glutamate. It is the third step in the universal histidine degradation pathway. This Salmonella schwarzengrund (strain CVM19633) protein is Imidazolonepropionase.